We begin with the raw amino-acid sequence, 619 residues long: Phosphoenolpyruvate carboxykinase [GTP] (619 aa).

Substrate contacts are provided by residues Arg-81 and 230–232 (YGG). Positions 239 and 259 each coordinate Mn(2+). Substrate is bound at residue Ser-281. GTP is bound at residue 282 to 287 (ACGKTN). Residue Cys-283 is part of the active site. Residue Asp-306 coordinates Mn(2+). 399 to 401 (NSR) serves as a coordination point for substrate. GTP-binding positions include Arg-401, Arg-432, and 525-528 (YGQN).

Belongs to the phosphoenolpyruvate carboxykinase [GTP] family. As to quaternary structure, monomer. Requires Mn(2+) as cofactor.

It catalyses the reaction oxaloacetate + GTP = phosphoenolpyruvate + GDP + CO2. Its function is as follows. In parasitic nematodes PEPCK carboxylates phosphoenolpyruvate to oxaloacetate thus introducing the products of glycolysis to mitochondrial metabolism. Functionally, catalyzes the conversion of oxaloacetate (OAA) to phosphoenolpyruvate (PEP), the rate-limiting step in the metabolic pathway that produces glucose from lactate and other precursors derived from the citric acid cycle. This Haemonchus contortus (Barber pole worm) protein is Phosphoenolpyruvate carboxykinase [GTP] (PEPCK).